The primary structure comprises 330 residues: Cyclin N-terminal domain-containing protein 1 (330 aa).

Residues 27-178 enclose the Cyclin N-terminal domain; the sequence is DALLHLAQQN…VLKSLNFRIN (152 aa).

As to quaternary structure, interacts with PRR19; this interaction promotes crossover formation. Interacts with RFC3 and RFC4; these interactions facilitate crossover formation. Interacts with CDC34; this interaction regulates the cell-cycle progression.

It localises to the nucleus. Its subcellular location is the cytoplasm. The protein resides in the chromosome. Functionally, plays a role in the different steps of crossover formation during meiotic recombination. Participates in the crossover differentiation step of crossover-specific recombination intermediates through its interaction with PRR19. In addition, stimulates crossover formation through the interactions with RFC3 and RFC4 and simultaneously regulates cell-cycle progression through interactions with CDC34 and subsequent ubiquitination of WEE1. May also participates in an active deselection process that destabilizes or removes excess pre-CO intermediates. The sequence is that of Cyclin N-terminal domain-containing protein 1 from Homo sapiens (Human).